The sequence spans 210 residues: Kalata-B2 (210 aa).

Positions 1–22 (MAKFTNCLVLSLLLAAFVGAFG) are cleaved as a signal peptide. A propeptide spanning residues 23-66 (AEFSEADKATLVNDIAENIQKEILGEVKTSETVLTMFLKEMQLK) is cleaved from the precursor. Residues 67-95 (GLPVCGETCFGGTCNTPGCSCTWPICTRD) constitute a cross-link (cyclopeptide (Gly-Asp)). Intrachain disulfides connect Cys-71–Cys-85, Cys-75–Cys-87, and Cys-80–Cys-92. The propeptide occupies 96–120 (SLPMRAGGKTSETTLHMFLKEMQLK). Positions 121–149 (GLPVCGETCFGGTCNTPGCSCTWPICTRD) form a cross-link, cyclopeptide (Gly-Asp). 3 disulfide bridges follow: Cys-125–Cys-139, Cys-129–Cys-141, and Cys-134–Cys-146. The propeptide occupies 150-174 (SLPMSAGGKTSETTLHMFLKEMQLK). Positions 175-203 (GLPVCGETCFGGTCNTPGCSCTWPICTRD) form a cross-link, cyclopeptide (Gly-Asp). Cystine bridges form between Cys-179–Cys-193, Cys-183–Cys-195, and Cys-188–Cys-200. A propeptide spanning residues 204 to 210 (SLPLVAA) is cleaved from the precursor.

It belongs to the cyclotide family. Moebius subfamily. Kalata-B2 is a cyclic peptide which occurs in three forms: with unmodified Trp, with Trp oxidized to form N-formylkynurenine and with Trp oxidized to form kynurenine. Oxidation is enhanced by exposure to sunlight.

Probably participates in a plant defense mechanism. Inhibitory effect on the growth and development of larvae from Helicoverpa punctigera. Has hemolytic activity. This is Kalata-B2 (OAK4) from Oldenlandia affinis.